We begin with the raw amino-acid sequence, 563 residues long: MNTFLIDYRDIQTPKKGFSGLFNDYSHEGQMHDKLTEKFFHFDYLKEADYYKHLNTLVSRSFRRKELAELLIRQNRRFGTAAKHLESIEKALSPRCMFVITGQQPGLFTGPLYSIYKALTAVIVAERQKAMFPEYDFIPLFWIEGEDHDFEESATTSIIDAGQIQQVSLDPWKRLPGQMVSRSAMGPGITDTLSDFTSMLQESDYREQIVSMLQEIYTPDSSLELAFGKTMAHLFKDYPLIFLSASDPDFKNLAKEIYYRELATCPHTSHTIIEQSSLLENMGYQTQVKPRAVNLFYVNHHDQRMKIEQSSADSFSIVPDRHRYSRHQILEMCDDHPERFSPNVILRPVVQDHVLPTFAYIAGPGEISYMAQYRKTYEHFGLKMPFIIPRGSFTLIEPAVRRTMDKVLQKTGRLTQSRKQLYHTAFHDLRILQKKAISGAENHDFDTLLDRTEKNILAELEALSPTLGKLDPNLEQVLAGSLVQIEKVMTGIRQKTHRAGRRKHDELVAQLDKAAAGIFPEDLPQERVINIFYYLNKYGWGILDAFATMLRAHSSESHIILEL.

Belongs to the BshC family.

The sequence is that of Putative cysteine ligase BshC from Chlorobium phaeobacteroides (strain BS1).